We begin with the raw amino-acid sequence, 256 residues long: Imidazole glycerol phosphate synthase subunit HisF (256 aa).

Residues Asp12 and Asp131 contribute to the active site.

The protein belongs to the HisA/HisF family. Heterodimer of HisH and HisF.

It localises to the cytoplasm. The enzyme catalyses 5-[(5-phospho-1-deoxy-D-ribulos-1-ylimino)methylamino]-1-(5-phospho-beta-D-ribosyl)imidazole-4-carboxamide + L-glutamine = D-erythro-1-(imidazol-4-yl)glycerol 3-phosphate + 5-amino-1-(5-phospho-beta-D-ribosyl)imidazole-4-carboxamide + L-glutamate + H(+). It participates in amino-acid biosynthesis; L-histidine biosynthesis; L-histidine from 5-phospho-alpha-D-ribose 1-diphosphate: step 5/9. Its function is as follows. IGPS catalyzes the conversion of PRFAR and glutamine to IGP, AICAR and glutamate. The HisF subunit catalyzes the cyclization activity that produces IGP and AICAR from PRFAR using the ammonia provided by the HisH subunit. This is Imidazole glycerol phosphate synthase subunit HisF from Ectopseudomonas mendocina (strain ymp) (Pseudomonas mendocina).